The sequence spans 911 residues: DNA ligase 4 (911 aa).

Glutamate 271, threonine 272, lysine 273, leucine 274, arginine 278, glutamate 331, lysine 345, phenylalanine 367, glutamate 427, lysine 432, lysine 449, and lysine 451 together coordinate ATP. Residue lysine 273 is the N6-AMP-lysine intermediate of the active site. Position 331 (glutamate 331) interacts with Mg(2+). Glutamate 427 is a Mg(2+) binding site. Residues 610 to 620 (LATKHLHVGDD) are required for catalytic activity. BRCT domains follow at residues 654-743 (KVSN…PRFM) and 808-911 (SPLS…QYLL).

The protein belongs to the ATP-dependent DNA ligase family. In terms of assembly, interacts with XRCC4; the LIG4-XRCC4 subcomplex has a 1:2 stoichiometry and XRCC4 is required for LIG4 stability. Component of the core long-range non-homologous end joining (NHEJ) complex (also named DNA-PK complex) composed of PRKDC, LIG4, XRCC4, XRCC6/Ku70, XRCC5/Ku86 and NHEJ1/XLF. Additional component of the NHEJ complex includes PAXX. Following autophosphorylation, PRKDC dissociates from DNA, leading to formation of the short-range NHEJ complex, composed of LIG4, XRCC4, XRCC6/Ku70, XRCC5/Ku86 and NHEJ1/XLF. Interacts with DCLRE1C; the interaction is direct. Interacts with APLF. Mg(2+) serves as cofactor.

It localises to the nucleus. It carries out the reaction ATP + (deoxyribonucleotide)n-3'-hydroxyl + 5'-phospho-(deoxyribonucleotide)m = (deoxyribonucleotide)n+m + AMP + diphosphate.. Functionally, DNA ligase involved in DNA non-homologous end joining (NHEJ); required for double-strand break (DSB) repair and V(D)J recombination. Catalyzes the NHEJ ligation step of the broken DNA during DSB repair by resealing the DNA breaks after the gap filling is completed. Joins single-strand breaks in a double-stranded polydeoxynucleotide in an ATP-dependent reaction. LIG4 is mechanistically flexible: it can ligate nicks as well as compatible DNA overhangs alone, while in the presence of XRCC4, it can ligate ends with 2-nucleotides (nt) microhomology and 1-nt gaps. Forms a subcomplex with XRCC4; the LIG4-XRCC4 subcomplex is responsible for the NHEJ ligation step and XRCC4 enhances the joining activity of LIG4. Binding of the LIG4-XRCC4 complex to DNA ends is dependent on the assembly of the DNA-dependent protein kinase complex DNA-PK to these DNA ends. LIG4 regulates nuclear localization of XRCC4. This chain is DNA ligase 4, found in Mus musculus (Mouse).